A 444-amino-acid polypeptide reads, in one-letter code: Cell wall mannoprotein PST1 (444 aa).

The first 19 residues, 1-19 (MQLHSLIASTALLITSALA), serve as a signal peptide directing secretion. Residues Asn-57, Asn-76, Asn-83, Asn-86, Asn-196, Asn-210, Asn-228, Asn-235, Asn-242, Asn-263, Asn-268, Asn-280, Asn-292, Asn-305, and Asn-329 are each glycosylated (N-linked (GlcNAc...) asparagine). Composition is skewed to low complexity over residues 359–381 (SVKL…SKSS) and 395–418 (KAAA…SSKG). Residues 359–418 (SVKLSSTSKSQSSQTTAKVSKSSSKAEEKKFTSGDIKAAASASSVSSSGASSSSSKSSKG) form a disordered region. A lipid anchor (GPI-anchor amidated asparagine) is attached at Asn-419. The propeptide at 420–444 (AAIMAPIGQTTPLVGLLTAIIMSIM) is removed in mature form.

Belongs to the SPS2 family. In terms of processing, extensively N- and O-mannosylated.

It is found in the cell membrane. The protein resides in the secreted. It localises to the cell wall. Its function is as follows. Has a partially redundant function to ECM33 in cell wall integrity. May be involved in a repair mechanism activated in response to cell wall damage. The protein is Cell wall mannoprotein PST1 (PST1) of Saccharomyces cerevisiae (strain ATCC 204508 / S288c) (Baker's yeast).